A 463-amino-acid chain; its full sequence is GTPase Der (463 aa).

EngA-type G domains lie at 2 to 164 (KKII…PKSK) and 198 to 369 (IKIG…KNYT). GTP is bound by residues 8-15 (GRPNVGKS), 55-59 (DSGGL), 116-119 (NKVD), 204-211 (GRVNVGKS), 251-255 (DTAGI), and 315-318 (NKWD). A KH-like domain is found at 370-454 (QKMKTSRLNE…PVILIPKNRS (85 aa)).

This sequence belongs to the TRAFAC class TrmE-Era-EngA-EngB-Septin-like GTPase superfamily. EngA (Der) GTPase family. Associates with the 50S ribosomal subunit.

GTPase that plays an essential role in the late steps of ribosome biogenesis. This chain is GTPase Der, found in Campylobacter fetus subsp. fetus (strain 82-40).